Consider the following 351-residue polypeptide: Putative F-box protein At5g52610 (351 aa).

The 41-residue stretch at 1–41 (MISEDLLVEILLRLPVKPLARCLCVCKLWATIIRSRYFINL) folds into the F-box domain.

The protein is Putative F-box protein At5g52610 of Arabidopsis thaliana (Mouse-ear cress).